Here is a 363-residue protein sequence, read N- to C-terminus: Chorismate synthase (363 aa).

The NADP(+) site is built by R48 and R54. Residues 125 to 127 (RSS), 237 to 238 (NA), G277, 292 to 296 (KPTSS), and R318 contribute to the FMN site.

This sequence belongs to the chorismate synthase family. As to quaternary structure, homotetramer. Requires FMNH2 as cofactor.

It carries out the reaction 5-O-(1-carboxyvinyl)-3-phosphoshikimate = chorismate + phosphate. It functions in the pathway metabolic intermediate biosynthesis; chorismate biosynthesis; chorismate from D-erythrose 4-phosphate and phosphoenolpyruvate: step 7/7. Its function is as follows. Catalyzes the anti-1,4-elimination of the C-3 phosphate and the C-6 proR hydrogen from 5-enolpyruvylshikimate-3-phosphate (EPSP) to yield chorismate, which is the branch point compound that serves as the starting substrate for the three terminal pathways of aromatic amino acid biosynthesis. This reaction introduces a second double bond into the aromatic ring system. The polypeptide is Chorismate synthase (Pseudomonas putida (strain GB-1)).